The following is an 82-amino-acid chain: Omega-conotoxin-like TxMKLT1-031 (82 aa).

Positions 1 to 22 (MKLTCMMIVAVLFLTAWTLVMA) are cleaved as a signal peptide. Residues 23 to 49 (DDSNNGLANLFSKSRDEMEDPEASKLE) constitute a propeptide that is removed on maturation. 3 cysteine pairs are disulfide-bonded: C53–C71, C60–C76, and C70–C81.

This sequence belongs to the conotoxin O1 superfamily. Expressed by the venom duct.

It is found in the secreted. Omega-conotoxins act at presynaptic membranes, they bind and block voltage-gated calcium channels (Cav). This chain is Omega-conotoxin-like TxMKLT1-031, found in Conus textile (Cloth-of-gold cone).